A 129-amino-acid chain; its full sequence is Follitropin subunit beta (129 aa).

Residues 1 to 20 (MKTVQFCFLFCCWKAICCNS) form the signal peptide. Intrachain disulfides connect C21–C69, C35–C84, C38–C122, C46–C100, C50–C102, and C105–C112. N-linked (GlcNAc...) asparagine glycosylation is found at N25 and N42.

The protein belongs to the glycoprotein hormones subunit beta family. Heterodimer. The active follitropin is a heterodimer composed of an alpha chain/CGA shared with other hormones and a unique beta chain/FSHB shown here.

The protein localises to the secreted. Together with the alpha chain CGA constitutes follitropin, the follicle-stimulating hormone, and provides its biological specificity to the hormone heterodimer. Binds FSHR, a G protein-coupled receptor, on target cells to activate downstream signaling pathways. Follitropin is involved in follicle development and spermatogenesis in reproductive organs. This is Follitropin subunit beta (FSHB) from Saimiri boliviensis boliviensis (Bolivian squirrel monkey).